The chain runs to 92 residues: Small ribosomal subunit protein bS20 (92 aa).

Positions 1–20 are disordered; sequence MANIASAKKRARQAENNRAH.

It belongs to the bacterial ribosomal protein bS20 family.

In terms of biological role, binds directly to 16S ribosomal RNA. The protein is Small ribosomal subunit protein bS20 of Methylococcus capsulatus (strain ATCC 33009 / NCIMB 11132 / Bath).